The sequence spans 876 residues: Alanine--tRNA ligase (876 aa).

Zn(2+) contacts are provided by histidine 562, histidine 566, cysteine 666, and histidine 670.

This sequence belongs to the class-II aminoacyl-tRNA synthetase family. The cofactor is Zn(2+).

It is found in the cytoplasm. The catalysed reaction is tRNA(Ala) + L-alanine + ATP = L-alanyl-tRNA(Ala) + AMP + diphosphate. In terms of biological role, catalyzes the attachment of alanine to tRNA(Ala) in a two-step reaction: alanine is first activated by ATP to form Ala-AMP and then transferred to the acceptor end of tRNA(Ala). Also edits incorrectly charged Ser-tRNA(Ala) and Gly-tRNA(Ala) via its editing domain. This is Alanine--tRNA ligase from Hahella chejuensis (strain KCTC 2396).